We begin with the raw amino-acid sequence, 631 residues long: Phosphomethylpyrimidine synthase (631 aa).

Residues asparagine 239, methionine 268, tyrosine 297, histidine 333, 353 to 355 (SRG), 394 to 397 (DGLR), and glutamate 433 each bind substrate. Histidine 437 contributes to the Zn(2+) binding site. Residue tyrosine 460 participates in substrate binding. Residue histidine 501 participates in Zn(2+) binding. Residues cysteine 581, cysteine 584, and cysteine 589 each contribute to the [4Fe-4S] cluster site.

Belongs to the ThiC family. Homodimer. Requires [4Fe-4S] cluster as cofactor.

It catalyses the reaction 5-amino-1-(5-phospho-beta-D-ribosyl)imidazole + S-adenosyl-L-methionine = 4-amino-2-methyl-5-(phosphooxymethyl)pyrimidine + CO + 5'-deoxyadenosine + formate + L-methionine + 3 H(+). It functions in the pathway cofactor biosynthesis; thiamine diphosphate biosynthesis. Catalyzes the synthesis of the hydroxymethylpyrimidine phosphate (HMP-P) moiety of thiamine from aminoimidazole ribotide (AIR) in a radical S-adenosyl-L-methionine (SAM)-dependent reaction. This is Phosphomethylpyrimidine synthase from Shigella sonnei (strain Ss046).